The sequence spans 218 residues: Ribonuclease T (218 aa).

The Exonuclease domain maps to 22–196 (VVVDVETAGF…YDAMKTAELF (175 aa)). Mg(2+)-binding residues include D25, E27, H183, and D188. Residue H183 is the Proton donor/acceptor of the active site.

The protein belongs to the RNase T family. As to quaternary structure, homodimer. Mg(2+) serves as cofactor.

Its function is as follows. Trims short 3' overhangs of a variety of RNA species, leaving a one or two nucleotide 3' overhang. Responsible for the end-turnover of tRNA: specifically removes the terminal AMP residue from uncharged tRNA (tRNA-C-C-A). Also appears to be involved in tRNA biosynthesis. The protein is Ribonuclease T of Hahella chejuensis (strain KCTC 2396).